The chain runs to 70 residues: Myotoxin (70 aa).

The signal sequence occupies residues 1-22 (MKILYLLFAFLFLAFLSEPGNA). Cystine bridges form between C26-C58, C33-C52, and C40-C59.

The protein belongs to the crotamine-myotoxin family. As to quaternary structure, monomer. In terms of tissue distribution, expressed by the venom gland.

The protein resides in the secreted. Functionally, cationic peptide that possesses multiple functions. It acts as a cell-penetrating peptide (CPP), and as a potent voltage-gated potassium channel (Kv) inhibitor. It exhibits antimicrobial activities, hind limb paralysis, and severe muscle necrosis by a non-enzymatic mechanism. This is Myotoxin from Crotalus helleri (Southern pacific rattlesnake).